A 634-amino-acid polypeptide reads, in one-letter code: Chaperone protein dnaK2 (634 aa).

The residue at position 197 (threonine 197) is a Phosphothreonine; by autocatalysis. Residues 601–623 (GAAAAESGADAGAAGAGDSSSGD) show a composition bias toward low complexity. The tract at residues 601-634 (GAAAAESGADAGAAGAGDSSSGDDVIDAEFTESK) is disordered. Positions 624–634 (DVIDAEFTESK) are enriched in acidic residues.

It belongs to the heat shock protein 70 family.

Its function is as follows. Acts as a chaperone. The polypeptide is Chaperone protein dnaK2 (dnaK2) (Prochlorococcus marinus (strain MIT 9313)).